The sequence spans 188 residues: dCTP deaminase (188 aa).

DCTP-binding positions include 111–116, 135–137, glutamine 156, tyrosine 170, and glutamine 180; these read KSTYAR and TLE. The Proton donor/acceptor role is filled by glutamate 137.

It belongs to the dCTP deaminase family. Homotrimer.

The enzyme catalyses dCTP + H2O + H(+) = dUTP + NH4(+). It functions in the pathway pyrimidine metabolism; dUMP biosynthesis; dUMP from dCTP (dUTP route): step 1/2. Functionally, catalyzes the deamination of dCTP to dUTP. This is dCTP deaminase from Ralstonia pickettii (strain 12J).